Here is a 450-residue protein sequence, read N- to C-terminus: Biotin carboxylase 1 (450 aa).

The region spanning 1–447 is the Biotin carboxylation domain; sequence MIKKLLIANR…NTKFLETYDV (447 aa). Residues lysine 116, lysine 158, 164 to 165, 200 to 203, and histidine 208 contribute to the ATP site; these read GG and EKYI. One can recognise an ATP-grasp domain in the interval 120–318; that stretch reads RETMKQAGVP…LIKEQIKVAS (199 aa). Lysine 237 is a hydrogencarbonate binding site. Residues glutamate 275 and glutamate 289 each coordinate ATP. Mg(2+) contacts are provided by glutamate 275, glutamate 289, and asparagine 291. Mn(2+) is bound by residues glutamate 275, glutamate 289, and asparagine 291. Residues arginine 293, valine 296, and arginine 339 each contribute to the hydrogencarbonate site. Arginine 293 is an active-site residue. Arginine 339 lines the biotin pocket.

Acetyl-CoA carboxylase is a heterohexamer of biotin carboxyl carrier protein, biotin carboxylase and the two subunits of carboxyl transferase in a 2:2 complex. Requires Mg(2+) as cofactor. Mn(2+) is required as a cofactor.

It catalyses the reaction N(6)-biotinyl-L-lysyl-[protein] + hydrogencarbonate + ATP = N(6)-carboxybiotinyl-L-lysyl-[protein] + ADP + phosphate + H(+). It participates in lipid metabolism; malonyl-CoA biosynthesis; malonyl-CoA from acetyl-CoA: step 1/1. Its function is as follows. This protein is a component of the acetyl coenzyme A carboxylase complex; first, biotin carboxylase catalyzes the carboxylation of the carrier protein and then the transcarboxylase transfers the carboxyl group to form malonyl-CoA. This is Biotin carboxylase 1 (accC1) from Bacillus subtilis (strain 168).